A 210-amino-acid chain; its full sequence is RNA chaperone ProQ (210 aa).

Composition is skewed to basic and acidic residues over residues 103–124 and 132–144; these read LKES…EKAK and RKAD…DKPK. The interval 103–148 is disordered; the sequence is LKESKERVFASRRTNNKEEKAKQPRRPAPRKADAAAKSDKPKAAPK.

Belongs to the ProQ family.

The protein localises to the cytoplasm. In terms of biological role, RNA chaperone with significant RNA binding, RNA strand exchange and RNA duplexing activities. In Aeromonas salmonicida (strain A449), this protein is RNA chaperone ProQ.